We begin with the raw amino-acid sequence, 117 residues long: Large ribosomal subunit protein bL20 (117 aa).

It belongs to the bacterial ribosomal protein bL20 family.

Functionally, binds directly to 23S ribosomal RNA and is necessary for the in vitro assembly process of the 50S ribosomal subunit. It is not involved in the protein synthesizing functions of that subunit. This chain is Large ribosomal subunit protein bL20, found in Wolinella succinogenes (strain ATCC 29543 / DSM 1740 / CCUG 13145 / JCM 31913 / LMG 7466 / NCTC 11488 / FDC 602W) (Vibrio succinogenes).